A 311-amino-acid chain; its full sequence is Pyrimidine-specific ribonucleoside hydrolase RihA (311 aa).

The active site involves His-240.

The protein belongs to the IUNH family. RihA subfamily.

In terms of biological role, hydrolyzes with equal efficiency cytidine or uridine to ribose and cytosine or uracil, respectively. In Escherichia coli O139:H28 (strain E24377A / ETEC), this protein is Pyrimidine-specific ribonucleoside hydrolase RihA.